The following is a 329-amino-acid chain: MSASPLKVAVTGAAGQIGYSLLFRLASGSLLGPDRPIELRLLEIEPALKALEGVVMELDDCAFPLLSGVEIGADPNKIFDGANLALLVGARPRGPGMERSDLLEANGAIFTAQGKALNEVAADDIRVGVTGNPANTNALIAMSNAPDIPRERFSALTRLDHNRAISQLAKKTGAKVTDITKMTIWGNHSATQYPDIFHAEVKGKNAAEVVGDQNWIENDFIPTVAKRGAAIIDARGASSAASAASATTDAARDWLLGTPAGDWVSMAVISDGSYGVPEGLISSFPVTTKDGDWTIVQGLEIDEFSRSRIDKTTAELADERNAVTQLGLI.

12-18 (GAAGQIG) is an NAD(+) binding site. Substrate-binding residues include Arg93 and Arg99. NAD(+) is bound by residues Asn106, Gln113, and 130 to 132 (TGN). Positions 132 and 163 each coordinate substrate. His188 serves as the catalytic Proton acceptor.

Belongs to the LDH/MDH superfamily. MDH type 2 family.

It carries out the reaction (S)-malate + NAD(+) = oxaloacetate + NADH + H(+). In terms of biological role, catalyzes the reversible oxidation of malate to oxaloacetate. The protein is Malate dehydrogenase of Mycobacterium avium (strain 104).